A 61-amino-acid chain; its full sequence is Probable tautomerase BH3814 (61 aa).

Pro-2 serves as the catalytic Proton acceptor; via imino nitrogen.

This sequence belongs to the 4-oxalocrotonate tautomerase family.

The polypeptide is Probable tautomerase BH3814 (Halalkalibacterium halodurans (strain ATCC BAA-125 / DSM 18197 / FERM 7344 / JCM 9153 / C-125) (Bacillus halodurans)).